The sequence spans 333 residues: Glycerol-3-phosphate dehydrogenase [NAD(P)+] (333 aa).

Trp-13, Lys-33, and Lys-108 together coordinate NADPH. The sn-glycerol 3-phosphate site is built by Lys-108 and Gly-138. Ser-142 serves as a coordination point for NADPH. Positions 193, 246, 256, 257, and 258 each coordinate sn-glycerol 3-phosphate. Lys-193 serves as the catalytic Proton acceptor. Arg-257 contributes to the NADPH binding site. Residues Val-281 and Glu-283 each coordinate NADPH.

The protein belongs to the NAD-dependent glycerol-3-phosphate dehydrogenase family.

The protein resides in the cytoplasm. It catalyses the reaction sn-glycerol 3-phosphate + NAD(+) = dihydroxyacetone phosphate + NADH + H(+). The catalysed reaction is sn-glycerol 3-phosphate + NADP(+) = dihydroxyacetone phosphate + NADPH + H(+). It functions in the pathway membrane lipid metabolism; glycerophospholipid metabolism. Its function is as follows. Catalyzes the reduction of the glycolytic intermediate dihydroxyacetone phosphate (DHAP) to sn-glycerol 3-phosphate (G3P), the key precursor for phospholipid synthesis. This Bifidobacterium longum (strain NCC 2705) protein is Glycerol-3-phosphate dehydrogenase [NAD(P)+].